Consider the following 242-residue polypeptide: MSEWLFDLGNSRFKYAPLDGTRAGDVQAWAHGAEAMDTAALSALPSGKVAHVASVAAAGLTERVLASLRTRFEQVRVVRTAAACAGVRIAYADPSRFGVDRFLALLGARGDAPVLVAGVGTALTIDVLGADGQHHGGRIAASPTTMREALHARAVQLPPTGGAYAELANDTDDALTSGCDGAAVALIERSLQHAARTLGMPVCLLVHGGGAPPLLPLLPTAEFRAALVLDGLATWATHSAAP.

Residue 7 to 14 (DLGNSRFK) coordinates ATP. Substrate-binding positions include Y91 and 98 to 101 (GVDR). The Proton acceptor role is filled by D100. T121 serves as a coordination point for ATP. Residue T171 coordinates substrate.

This sequence belongs to the type III pantothenate kinase family. As to quaternary structure, homodimer. It depends on NH4(+) as a cofactor. K(+) serves as cofactor.

It localises to the cytoplasm. It catalyses the reaction (R)-pantothenate + ATP = (R)-4'-phosphopantothenate + ADP + H(+). The protein operates within cofactor biosynthesis; coenzyme A biosynthesis; CoA from (R)-pantothenate: step 1/5. Catalyzes the phosphorylation of pantothenate (Pan), the first step in CoA biosynthesis. The polypeptide is Type III pantothenate kinase (Xanthomonas campestris pv. campestris (strain 8004)).